We begin with the raw amino-acid sequence, 254 residues long: Probable 2,4-dienoyl-CoA reductase [(2E)-enoyl-CoA-producing] (254 aa).

Residue 6–38 (VIITGGSSGMGKAMAKKQAELGWHVMVTGRNHE) participates in NADP(+) binding. Residue Thr100 participates in substrate binding. Tyr142 acts as the Proton acceptor in catalysis. Lys157 is a binding site for NAD(+).

This sequence belongs to the short-chain dehydrogenases/reductases (SDR) family. 2,4-dienoyl-CoA reductase subfamily.

The catalysed reaction is a 4,5-saturated-(2E)-enoyl-CoA + NADP(+) = a (2E,4E)-dienoyl-CoA + NADPH + H(+). It catalyses the reaction a (2E,4Z)-dienoyl-CoA + NADPH + H(+) = a 4,5-saturated-(2E)-enoyl-CoA + NADP(+). It participates in lipid metabolism; fatty acid beta-oxidation. Functionally, auxiliary enzyme of beta-oxidation. It participates in the metabolism of unsaturated fatty enoyl-CoA esters having double bonds in both even- and odd-numbered positions. Catalyzes the NADP-dependent reduction of 2,4-dienoyl-CoA to yield trans-3-enoyl-CoA. The chain is Probable 2,4-dienoyl-CoA reductase [(2E)-enoyl-CoA-producing] (fadH) from Bacillus subtilis (strain 168).